The primary structure comprises 93 residues: Alpha-defensin 2 (93 aa).

An N-terminal signal peptide occupies residues 1–19 (MKPLVLLSALVLLSFQVQA). Residues 20-58 (DPIQNTDEETKTEEQSGEEDQAVSVSFGDREGASLQEES) constitute a propeptide that is removed on maturation. A disordered region spans residues 23-49 (QNTDEETKTEEQSGEEDQAVSVSFGDR). Intrachain disulfides connect C64/C92, C66/C81, and C71/C91.

Belongs to the alpha-defensin family. In terms of tissue distribution, paneth cells of the small bowel.

It localises to the secreted. Its function is as follows. Has broad-spectrum antimicrobial properties. Has antibacterial activity against the Gram-positive bacterium L.monocytogenes EGD and the Gram-negative bacteria E.coli ML-35p and avirulent S.typhimurium 7953, but not against the mouse-virulent S.typhimurium 14028S. Probably contributes to the antimicrobial barrier function of the small bowel mucosa. In Mus musculus (Mouse), this protein is Alpha-defensin 2 (Defa2).